The chain runs to 363 residues: Aminomethyltransferase (363 aa).

It belongs to the GcvT family. As to quaternary structure, the glycine cleavage system is composed of four proteins: P, T, L and H.

The catalysed reaction is N(6)-[(R)-S(8)-aminomethyldihydrolipoyl]-L-lysyl-[protein] + (6S)-5,6,7,8-tetrahydrofolate = N(6)-[(R)-dihydrolipoyl]-L-lysyl-[protein] + (6R)-5,10-methylene-5,6,7,8-tetrahydrofolate + NH4(+). The glycine cleavage system catalyzes the degradation of glycine. This chain is Aminomethyltransferase, found in Saccharophagus degradans (strain 2-40 / ATCC 43961 / DSM 17024).